The chain runs to 222 residues: Putative N-acetylmannosamine-6-phosphate 2-epimerase (222 aa).

Belongs to the NanE family.

It catalyses the reaction an N-acyl-D-glucosamine 6-phosphate = an N-acyl-D-mannosamine 6-phosphate. It participates in amino-sugar metabolism; N-acetylneuraminate degradation; D-fructose 6-phosphate from N-acetylneuraminate: step 3/5. Its function is as follows. Converts N-acetylmannosamine-6-phosphate (ManNAc-6-P) to N-acetylglucosamine-6-phosphate (GlcNAc-6-P). This chain is Putative N-acetylmannosamine-6-phosphate 2-epimerase, found in Staphylococcus aureus (strain Mu3 / ATCC 700698).